Consider the following 159-residue polypeptide: Stress-induced protein 1 (159 aa).

Residues 33–141 enclose the sHSP domain; that stretch reads NNFNNIVPQQ…TVRALPIHTS (109 aa).

It belongs to the small heat shock protein (HSP20) family.

This is Stress-induced protein 1 from Caenorhabditis elegans.